The sequence spans 610 residues: UvrABC system protein C (610 aa).

The GIY-YIG domain occupies 16–94; sequence SQPGVYRMYD…IKLYQPRYNV (79 aa). The 36-residue stretch at 204–239 folds into the UVR domain; the sequence is QQVLTQLITRMEEASQQLHFEDAARIRDQIQAVRRV.

This sequence belongs to the UvrC family. In terms of assembly, interacts with UvrB in an incision complex.

Its subcellular location is the cytoplasm. In terms of biological role, the UvrABC repair system catalyzes the recognition and processing of DNA lesions. UvrC both incises the 5' and 3' sides of the lesion. The N-terminal half is responsible for the 3' incision and the C-terminal half is responsible for the 5' incision. This chain is UvrABC system protein C, found in Yersinia pseudotuberculosis serotype I (strain IP32953).